The primary structure comprises 1007 residues: Kinesin-like protein KIN-14F (1007 aa).

One can recognise a Calponin-homology (CH) domain in the interval A41–D187. Positions S390–V715 constitute a Kinesin motor domain. G472 to T479 contacts ATP. The stretch at G718 to S748 forms a coiled coil. Residues K885–R904 show a composition bias toward basic and acidic residues. Disordered regions lie at residues K885–D924 and S944–K1007. Over residues T963 to G1001 the composition is skewed to polar residues.

This sequence belongs to the TRAFAC class myosin-kinesin ATPase superfamily. Kinesin family. KIN-14 subfamily.

The protein is Kinesin-like protein KIN-14F of Oryza sativa subsp. japonica (Rice).